The primary structure comprises 619 residues: Chaperone protein HscA homolog (619 aa).

It belongs to the heat shock protein 70 family.

Functionally, chaperone involved in the maturation of iron-sulfur cluster-containing proteins. Has a low intrinsic ATPase activity which is markedly stimulated by HscB. The sequence is that of Chaperone protein HscA homolog from Azotobacter vinelandii.